A 209-amino-acid chain; its full sequence is N-(5'-phosphoribosyl)anthranilate isomerase (209 aa).

Belongs to the TrpF family.

It carries out the reaction N-(5-phospho-beta-D-ribosyl)anthranilate = 1-(2-carboxyphenylamino)-1-deoxy-D-ribulose 5-phosphate. It functions in the pathway amino-acid biosynthesis; L-tryptophan biosynthesis; L-tryptophan from chorismate: step 3/5. The polypeptide is N-(5'-phosphoribosyl)anthranilate isomerase (Pyrobaculum islandicum (strain DSM 4184 / JCM 9189 / GEO3)).